The sequence spans 288 residues: uncharacterized protein (288 aa).

The next 4 membrane-spanning stretches (helical) occupy residues 43–63, 190–210, 243–263, and 265–285; these read LFTL…NYII, LFIF…FLLE, GIPI…SILI, and LLQM…NKSL.

The protein localises to the cell membrane. This is an uncharacterized protein from Rickettsia prowazekii (strain Madrid E).